We begin with the raw amino-acid sequence, 219 residues long: Small ribosomal subunit protein uS3 (219 aa).

A KH type-2 domain is found at I38 to K106.

The protein belongs to the universal ribosomal protein uS3 family. As to quaternary structure, part of the 30S ribosomal subunit. Forms a tight complex with proteins S10 and S14.

Its function is as follows. Binds the lower part of the 30S subunit head. Binds mRNA in the 70S ribosome, positioning it for translation. The protein is Small ribosomal subunit protein uS3 of Lachnoclostridium phytofermentans (strain ATCC 700394 / DSM 18823 / ISDg) (Clostridium phytofermentans).